We begin with the raw amino-acid sequence, 1358 residues long: DNA-directed RNA polymerase subunit beta (1358 aa).

This sequence belongs to the RNA polymerase beta chain family. In terms of assembly, the RNAP catalytic core consists of 2 alpha, 1 beta, 1 beta' and 1 omega subunit. When a sigma factor is associated with the core the holoenzyme is formed, which can initiate transcription.

The catalysed reaction is RNA(n) + a ribonucleoside 5'-triphosphate = RNA(n+1) + diphosphate. DNA-dependent RNA polymerase catalyzes the transcription of DNA into RNA using the four ribonucleoside triphosphates as substrates. This is DNA-directed RNA polymerase subunit beta from Azotobacter vinelandii (strain DJ / ATCC BAA-1303).